We begin with the raw amino-acid sequence, 367 residues long: Voltage-gated potassium channel subunit beta-2 (367 aa).

Residues Thr56, Trp57, Gln63, and Asp85 each contribute to the NADP(+) site. The Proton donor/acceptor role is filled by Tyr90. 18 residues coordinate NADP(+): Asn158, Ser188, Arg189, Gln214, Trp243, Ser244, Pro245, Leu246, Ala247, Cys248, Lys254, Tyr262, Arg264, Gly323, Ser325, Gln329, Glu332, and Asn333.

The protein belongs to the shaker potassium channel beta subunit family. In terms of assembly, forms heteromultimeric complex with alpha subunits.

The protein resides in the cytoplasm. It is found in the membrane. It localises to the cell membrane. The protein localises to the cell projection. Its subcellular location is the axon. The protein resides in the synapse. It is found in the synaptosome. It localises to the cytoskeleton. Functionally, regulatory subunit of the voltage-gated potassium (Kv) Shaker channels composed of pore-forming and potassium-conducting alpha subunits and of regulatory beta subunits. The beta-2/KCNAB2 cytoplasmic subunit may promote potassium channel closure via a mechanism that does not involve physical obstruction of the channel pore. Enhances current amplitude of Kv1.1/KCNA1 and Kv2.2/KCNA2 channels. May display nicotinamide adenine dinucleotide phosphate (NADPH)-dependent aldoketoreductase activity by catalyzing the NADPH-dependent reduction of a wide range of aldehyde and ketone substrates. The binding of oxidized and reduced nucleotide may alter Kv channel gating and contribute to dynamic fine tuning of cell excitability. This chain is Voltage-gated potassium channel subunit beta-2 (kcnab2), found in Xenopus laevis (African clawed frog).